Reading from the N-terminus, the 493-residue chain is Keratin, type II cuticular Hb3 (493 aa).

Residues 1 to 111 (MTCGFSTVGS…PNAQCVKQEE (111 aa)) are head. The IF rod domain occupies 111–422 (EKEQIKCLNN…RLLEGEEQRL (312 aa)). The interval 112 to 146 (KEQIKCLNNRFAAFIDKVRFLEQQNKLLETKLQFY) is coil 1A. Residues 147–156 (QNRQCCESNL) form a linker 1 region. The segment at 157-257 (EPLFEGYIET…YEEEIRVLQA (101 aa)) is coil 1B. Lysine 217 is covalently cross-linked (Glycyl lysine isopeptide (Lys-Gly) (interchain with G-Cter in SUMO1)). The linker 12 stretch occupies residues 258–274 (NISDTSVIVKMDNSRGL). Positions 275-418 (NMDNIVAEIK…ATYRRLLEGE (144 aa)) are coil 2. The tract at residues 419–493 (EQRLCEGVGA…GGGSCSLGRC (75 aa)) is tail.

Belongs to the intermediate filament family. Heterotetramer of two type I and two type II keratins.

In Bos taurus (Bovine), this protein is Keratin, type II cuticular Hb3.